The following is a 545-amino-acid chain: MAELTINADDVRNALNEFAASYEPGNAERVEVGRVTTASDGIARVEGLPSVMANELLRFEDGTLGLAQNLDVREIGVIILGDFTGIEEGQEVHRTGEILSVPVGDQFLGRVVDPLGVPIDGLGEIQAETTRALELQAPGVTQRQSVKEPMQTGLKAIDAMIPIGRGQRQLIIGDRKTGKTAIAVDTILNQQANWASGDVKKQVRCIYVAIGQKASTIAEVRQTLEDNGALEYTTIVASPASDPAGFKYLAPYAGSAIGQHWMYSGKHVLIIFDDLSKQAEAYRAVSLLLRRPPGREAYPGDVFYLHSRLLERCAKLSDELGAGSMTGLPIIETKANDVGAFIPTNVVSITDGQIFLQSDLFNANQRPAVDVGISVSRVGGSAQVKSMKTVSGTLKLDLAQYRDMQAFAMFASDLDAASRQQLTRGSRLMELLKQPQYTPYPVEDQVVSIWAGTHGYLDEVPVEDILRFEREFLEHLRHSTEILTTLAQTNKLEDSTVEALKTSIVDFKKGFFGDGANHLVGAGHEEFDSLSEADVDQEKIVKQKR.

Residue 173 to 180 (GDRKTGKT) coordinates ATP.

This sequence belongs to the ATPase alpha/beta chains family. F-type ATPases have 2 components, CF(1) - the catalytic core - and CF(0) - the membrane proton channel. CF(1) has five subunits: alpha(3), beta(3), gamma(1), delta(1), epsilon(1). CF(0) has three main subunits: a(1), b(2) and c(9-12). The alpha and beta chains form an alternating ring which encloses part of the gamma chain. CF(1) is attached to CF(0) by a central stalk formed by the gamma and epsilon chains, while a peripheral stalk is formed by the delta and b chains.

The protein localises to the cell membrane. It catalyses the reaction ATP + H2O + 4 H(+)(in) = ADP + phosphate + 5 H(+)(out). In terms of biological role, produces ATP from ADP in the presence of a proton gradient across the membrane. The alpha chain is a regulatory subunit. In Renibacterium salmoninarum (strain ATCC 33209 / DSM 20767 / JCM 11484 / NBRC 15589 / NCIMB 2235), this protein is ATP synthase subunit alpha.